The primary structure comprises 485 residues: CUGBP Elav-like family member 5 (485 aa).

Basic and acidic residues predominate over residues 1–11 (MARLTESEARR). The disordered stretch occupies residues 1–40 (MARLTESEARRQQQQLLQPRPSPVGSSGPEPPGGQPDGMK). Over residues 12–28 (QQQQLLQPRPSPVGSSG) the composition is skewed to low complexity. RRM domains are found at residues 45 to 126 (IKLF…PADS), 134 to 214 (RKLF…FADT), and 400 to 478 (CNLF…LKRP).

The protein belongs to the CELF/BRUNOL family. In terms of tissue distribution, expressed in brain.

It is found in the nucleus. Its subcellular location is the cytoplasm. Its function is as follows. RNA-binding protein implicated in the regulation of pre-mRNA alternative splicing. Mediates exon inclusion and/or exclusion in pre-mRNA that are subject to tissue-specific and developmentally regulated alternative splicing. Specifically activates exon 5 inclusion of cardiac isoforms of TNNT2 during heart remodeling at the juvenile to adult transition. Binds to muscle-specific splicing enhancer (MSE) intronic sites flanking the alternative exon 5 of TNNT2 pre-mRNA. The sequence is that of CUGBP Elav-like family member 5 (CELF5) from Homo sapiens (Human).